A 635-amino-acid chain; its full sequence is Threonine--tRNA ligase (635 aa).

Residues 1–58 (MIRVICNNETVELPKGATAADFASKIKNSHYFAGVVINDQIKDLSTTLNEGDTLRFVT) form the TGS domain. The interval 237 to 528 (DHRVLGAKLD…LIEHFKGKFP (292 aa)) is catalytic. 3 residues coordinate Zn(2+): Cys328, His379, and His505.

Belongs to the class-II aminoacyl-tRNA synthetase family. Homodimer. It depends on Zn(2+) as a cofactor.

It localises to the cytoplasm. The enzyme catalyses tRNA(Thr) + L-threonine + ATP = L-threonyl-tRNA(Thr) + AMP + diphosphate + H(+). Functionally, catalyzes the attachment of threonine to tRNA(Thr) in a two-step reaction: L-threonine is first activated by ATP to form Thr-AMP and then transferred to the acceptor end of tRNA(Thr). Also edits incorrectly charged L-seryl-tRNA(Thr). This is Threonine--tRNA ligase from Chlamydia caviae (strain ATCC VR-813 / DSM 19441 / 03DC25 / GPIC) (Chlamydophila caviae).